Reading from the N-terminus, the 293-residue chain is Nucleotide-binding protein cauri_1197 (293 aa).

ATP is bound at residue 16 to 23 (GMSGGGLT). 67-70 (DVRS) is a binding site for GTP.

Belongs to the RapZ-like family.

In terms of biological role, displays ATPase and GTPase activities. The sequence is that of Nucleotide-binding protein cauri_1197 from Corynebacterium aurimucosum (strain ATCC 700975 / DSM 44827 / CIP 107346 / CN-1) (Corynebacterium nigricans).